Consider the following 249-residue polypeptide: Vesicle-associated membrane protein-associated protein A (249 aa).

At alanine 2 the chain carries N-acetylalanine. Over 2 to 227 (ASASGAMAKH…VSFRDNVTSP (226 aa)) the chain is Cytoplasmic. Residues 14–131 (ILVLDPPSDL…MDSKLRCVFE (118 aa)) form the MSP domain. The tract at residues 50-53 (KVKT) is phosphorylated FFAT motif binding. Lysine 125 is subject to N6-acetyllysine. The span at 135-144 (ENDKLNDMEP) shows a compositional bias: basic and acidic residues. Residues 135-166 (ENDKLNDMEPSKAVPLNASKQDGPLPKPHSVS) form a disordered region. Serine 166 bears the Phosphoserine mark. Residues 168-207 (NDTETRKLMEECKRLQGEMMKLSEENRHLRDEGLRLRKVA) adopt a coiled-coil conformation. Threonine 170 is modified (phosphothreonine). A phosphoserine mark is found at serine 214, serine 216, and serine 219. A helical; Anchor for type IV membrane protein transmembrane segment spans residues 228-248 (LPSLLVVIAAIFIGFFLGKFI).

This sequence belongs to the VAMP-associated protein (VAP) (TC 9.B.17) family. Homodimer; disulfide-linked. Heterodimer with VAPB. Interacts with VAMP1, VAMP2, STX1A, BET1, SEC22C and with the C-terminal domain of OCLN. Interacts (via MSP domain) with OSBPL1A (via FFAT motif). Interacts (via MSP domain) with ZFYVE27; may retain ZFYVE27 in the endoplasmic reticulum and regulate its function in cell projections formation. Interacts with OSBP. Interacts (via C-terminus) with RSAD2/viperin (via C-terminus). Interacts with IFITM3. Interacts with OSBPL3 (phosphorylated form). Interacts with KIF5A in a ZFYVE27-dependent manner. Interacts (via MSP domain) with STARD3 (via phosphorylated FFAT motif); this interaction recruits VAPA to the endosome. Interacts with STARD3NL (via FFAT motif). Interacts with CERT1. Interacts with PLEKHA3 and SACM1L to form a ternary complex. Interacts with VPS13A (via FFAT motif). Interacts with RB1CC1 (via phosphorylated FFAT motif), MIGA2 (via phosphorylated FFAT motif), RMDN3 (via phosphorylated FFAT motif), KCNB1 (via phosphorylated FFAT motif) and KCNB2 (via phosphorylated FFAT motif). Interacts (via MSP domain) with WDR44; the interactions connect the endoplasmic reticulum (ER) with the endosomal tubule. In terms of tissue distribution, ubiquitous.

It is found in the endoplasmic reticulum membrane. The protein localises to the cell membrane. It localises to the cell junction. Its subcellular location is the tight junction. The protein resides in the nucleus membrane. Endoplasmic reticulum (ER)-anchored protein that mediates the formation of contact sites between the ER and endosomes via interaction with FFAT motif-containing proteins such as STARD3 or WDR44. STARD3-VAPA interaction enables cholesterol transfer from the ER to endosomes. Via interaction with WDR44 participates in neosynthesized protein export. In addition, recruited to the plasma membrane through OSBPL3 binding. The OSBPL3-VAPA complex stimulates RRAS signaling which in turn attenuates integrin beta-1 (ITGB1) activation at the cell surface. With OSBPL3, may regulate ER morphology. May play a role in vesicle trafficking. The sequence is that of Vesicle-associated membrane protein-associated protein A from Rattus norvegicus (Rat).